The primary structure comprises 372 residues: Sesquiterpene synthase Agr9 (372 aa).

Residues aspartate 87, asparagine 225, serine 229, and glutamate 233 each contribute to the Mg(2+) site. Positions 87-91 match the DDXXD motif motif; that stretch reads DEYTD. Residues arginine 314 and tyrosine 315 each coordinate (2E,6E)-farnesyl diphosphate.

The protein belongs to the terpene synthase family. Mg(2+) serves as cofactor.

The catalysed reaction is (2E,6E)-farnesyl diphosphate = gamma-muurolene + diphosphate. It catalyses the reaction (2E,6E)-farnesyl diphosphate = delta-cadinene + diphosphate. Functionally, terpene cyclase that catalyzes the cyclization of farnesyl diphosphate (FPP) to various sesquiterpenes, including gamma-muurolene, beta-cadinene and delta-cadinene. This is Sesquiterpene synthase Agr9 from Cyclocybe aegerita (Black poplar mushroom).